The sequence spans 308 residues: MDYYYCPSLLKLLRYLWNQLKQCFSRRAPEAKDTDTLVQEADSQYGTWADQHQNGGSFGPESPSPDSSAASVGKQPPGSHLSSYTESTSVEQRDSSRDRRSSSVDRSSSELESTDGPEGPPPSDVCPAQEDDFSFIHQTSVLDSSALKTRVQLSKRSRRRAPISHSLRRSQFSESESRSPLEEESHSTWMFKDSTEEKSPRRDESDEEPPRVERTPVSHPQRMPVFPGMDPAVLKAQLPKRSEVDSPGDSLSWTPQPKSPKSPFHPGVLGSRVLPPSTEKEERSEECSPQWLKELKSKKRQSLYENQA.

A compositionally biased stretch (polar residues) spans 43-55 (SQYGTWADQHQNG). The disordered stretch occupies residues 43-289 (SQYGTWADQH…KEERSEECSP (247 aa)). Serine 62 carries the phosphoserine modification. Residues 80–90 (HLSSYTESTSV) show a composition bias toward polar residues. The span at 91–109 (EQRDSSRDRRSSSVDRSSS) shows a compositional bias: basic and acidic residues. Polar residues predominate over residues 136–152 (IHQTSVLDSSALKTRVQ). A compositionally biased stretch (basic residues) spans 153–168 (LSKRSRRRAPISHSLR). Serine 166 bears the Phosphoserine mark. Composition is skewed to basic and acidic residues over residues 175–186 (SESRSPLEEESH) and 193–216 (DSTE…ERTP). Phosphoserine is present on residues serine 205, serine 259, serine 262, and serine 288.

This is an uncharacterized protein from Mus musculus (Mouse).